The chain runs to 651 residues: DNA mismatch repair protein MutL (651 aa).

Residues 336-398 (RLDMTEPETG…ANSGYQPENP (63 aa)) form a disordered region. Residues 385-394 (ARESANSGYQ) are compositionally biased toward polar residues.

This sequence belongs to the DNA mismatch repair MutL/HexB family.

In terms of biological role, this protein is involved in the repair of mismatches in DNA. It is required for dam-dependent methyl-directed DNA mismatch repair. May act as a 'molecular matchmaker', a protein that promotes the formation of a stable complex between two or more DNA-binding proteins in an ATP-dependent manner without itself being part of a final effector complex. The polypeptide is DNA mismatch repair protein MutL (Pectobacterium atrosepticum (strain SCRI 1043 / ATCC BAA-672) (Erwinia carotovora subsp. atroseptica)).